A 101-amino-acid polypeptide reads, in one-letter code: Small ribosomal subunit protein uS10 (101 aa).

The protein belongs to the universal ribosomal protein uS10 family. In terms of assembly, part of the 30S ribosomal subunit.

Functionally, involved in the binding of tRNA to the ribosomes. The protein is Small ribosomal subunit protein uS10 of Corynebacterium aurimucosum (strain ATCC 700975 / DSM 44827 / CIP 107346 / CN-1) (Corynebacterium nigricans).